A 269-amino-acid chain; its full sequence is 3-methyl-2-oxobutanoate hydroxymethyltransferase (269 aa).

Positions 50 and 89 each coordinate Mg(2+). 3-methyl-2-oxobutanoate-binding positions include Asp-50–Ser-51, Asp-89, and Lys-118. Glu-120 is a Mg(2+) binding site. The active-site Proton acceptor is the Glu-187.

The protein belongs to the PanB family. In terms of assembly, homodecamer; pentamer of dimers. It depends on Mg(2+) as a cofactor.

The protein localises to the cytoplasm. The catalysed reaction is 3-methyl-2-oxobutanoate + (6R)-5,10-methylene-5,6,7,8-tetrahydrofolate + H2O = 2-dehydropantoate + (6S)-5,6,7,8-tetrahydrofolate. The protein operates within cofactor biosynthesis; (R)-pantothenate biosynthesis; (R)-pantoate from 3-methyl-2-oxobutanoate: step 1/2. Functionally, catalyzes the reversible reaction in which hydroxymethyl group from 5,10-methylenetetrahydrofolate is transferred onto alpha-ketoisovalerate to form ketopantoate. The chain is 3-methyl-2-oxobutanoate hydroxymethyltransferase from Nitrosomonas europaea (strain ATCC 19718 / CIP 103999 / KCTC 2705 / NBRC 14298).